The sequence spans 189 residues: MVKFIDAKIDNFAKQLQQRNNLDRIEYLKMRLGMQVVVNNFFKTIVIYGVSLLCHMFLYTLTVHLTFFFIRHFAHGAHAKNSLLCYIQSVIYFVLLPWIVGYVQVSSLIMYTLALVGLIIISIYAPSATKKQPIPERLRRGKKIKAICLTLIFLLISLFLNEPYQQLMLLGIVIISILQFPIFFPKEDY.

A run of 5 helical transmembrane segments spans residues 50–70 (VSLL…FFFI), 83–103 (LLCY…VGYV), 105–125 (VSSL…SIYA), 143–163 (KIKA…LNEP), and 164–184 (YQQL…PIFF).

The protein belongs to the AgrB family.

The protein resides in the cell membrane. Functionally, essential for the production of a quorum sensing system signal molecule, the autoinducing peptide (AIP). This quorum sensing system is responsible for the regulation of the expression of virulence factor genes. Involved in the proteolytic processing of AgrD, the precursor of AIP. This Staphylococcus saprophyticus subsp. saprophyticus (strain ATCC 15305 / DSM 20229 / NCIMB 8711 / NCTC 7292 / S-41) protein is Accessory gene regulator protein B.